Reading from the N-terminus, the 834-residue chain is Periplasmic nitrate reductase (834 aa).

The segment at residues 1–31 (MSSELTRRNLLKAHAAGIAAATAGIALPAAA) is a signal peptide (tat-type signal). The 4Fe-4S Mo/W bis-MGD-type domain maps to 43 to 99 (IKWSKAPCRFCGTGCGVMVGVKEGKVVATHGDMQAEVNRGLNCIKGYFLSKIMYGKD). [4Fe-4S] cluster-binding residues include Cys50, Cys53, Cys57, and Cys85. Residues Lys87, Gln154, Asn179, Cys183, 216-223 (WGSNMAEM), 247-251 (STFTH), 266-268 (GTD), Met377, Gln381, Asn487, 513-514 (SD), Lys536, Asp563, and 723-732 (TGRVLEHWHS) contribute to the Mo-bis(molybdopterin guanine dinucleotide) site. Trp799 is a substrate binding site. Positions 807 and 824 each coordinate Mo-bis(molybdopterin guanine dinucleotide).

It belongs to the prokaryotic molybdopterin-containing oxidoreductase family. NasA/NapA/NarB subfamily. Component of the periplasmic nitrate reductase NapAB complex composed of NapA and NapB. It depends on [4Fe-4S] cluster as a cofactor. The cofactor is Mo-bis(molybdopterin guanine dinucleotide). Post-translationally, predicted to be exported by the Tat system. The position of the signal peptide cleavage has not been experimentally proven.

Its subcellular location is the periplasm. The catalysed reaction is 2 Fe(II)-[cytochrome] + nitrate + 2 H(+) = 2 Fe(III)-[cytochrome] + nitrite + H2O. Catalytic subunit of the periplasmic nitrate reductase complex NapAB. Receives electrons from NapB and catalyzes the reduction of nitrate to nitrite. The chain is Periplasmic nitrate reductase from Agrobacterium fabrum (strain C58 / ATCC 33970) (Agrobacterium tumefaciens (strain C58)).